Consider the following 369-residue polypeptide: Flagellar P-ring protein (369 aa).

A signal peptide spans 1-23; that stretch reads MIKQFAVSLLLVLLTLVTTTASA.

It belongs to the FlgI family. As to quaternary structure, the basal body constitutes a major portion of the flagellar organelle and consists of four rings (L,P,S, and M) mounted on a central rod.

The protein resides in the periplasm. Its subcellular location is the bacterial flagellum basal body. Assembles around the rod to form the L-ring and probably protects the motor/basal body from shearing forces during rotation. The polypeptide is Flagellar P-ring protein (Photorhabdus laumondii subsp. laumondii (strain DSM 15139 / CIP 105565 / TT01) (Photorhabdus luminescens subsp. laumondii)).